Here is a 330-residue protein sequence, read N- to C-terminus: Solute carrier family 25 member 16 (330 aa).

Solcar repeat units lie at residues 32–118 (FYWL…YKTL), 126–214 (SGHV…LKSV), and 236–326 (LKTH…MKQF). Transmembrane regions (helical) follow at residues 33–52 (YWLRSFLAGGIAGCCAKTTV), 95–112 (GAMMIRIFPYGAIQFMAF), 132–149 (LMAGSMAGMTAVICTYPL), 189–209 (GLMPTILGMAPYAGVSFFTFG), 242–262 (LLCGGVAGAIAQTISYPFDVT), and 297–317 (GLYRGLSLNYIRCVPSQAVAF).

The protein belongs to the mitochondrial carrier (TC 2.A.29) family. Mostly in thyroid, liver, lung, kidney and to a lesser extent in heart and skeletal muscle.

It localises to the mitochondrion inner membrane. May be involved in the transport of coenzyme A in the mitochondrial matrix. Very little is known about the physiological function of this carrier. The protein is Solute carrier family 25 member 16 (SLC25A16) of Bos taurus (Bovine).